A 372-amino-acid chain; its full sequence is Cytochrome b (372 aa).

A run of 4 helical transmembrane segments spans residues Phe-25 to Leu-45, Trp-69 to Ile-90, Trp-105 to Leu-125, and Phe-170 to Ile-190. Heme b contacts are provided by His-75 and His-89. Positions 174 and 188 each coordinate heme b. His-193 is a binding site for a ubiquinone. A run of 4 helical transmembrane segments spans residues Tyr-218 to Ala-238, Leu-280 to His-300, Leu-312 to Ser-332, and Phe-339 to Pro-358.

Belongs to the cytochrome b family. In terms of assembly, the cytochrome bc1 complex contains 3 respiratory subunits (MT-CYB, CYC1 and UQCRFS1), 2 core proteins (UQCRC1 and UQCRC2) and probably 6 low-molecular weight proteins. Requires heme b as cofactor.

The protein resides in the mitochondrion inner membrane. Component of the ubiquinol-cytochrome c reductase complex (complex III or cytochrome b-c1 complex) that is part of the mitochondrial respiratory chain. The b-c1 complex mediates electron transfer from ubiquinol to cytochrome c. Contributes to the generation of a proton gradient across the mitochondrial membrane that is then used for ATP synthesis. This Naja nivea (Cape cobra) protein is Cytochrome b (MT-CYB).